The chain runs to 29 residues: Pyridoxal 5'-phosphate synthase subunit PdxS (29 aa).

Belongs to the PdxS/SNZ family. As to quaternary structure, in the presence of PdxT, forms a dodecamer of heterodimers.

The catalysed reaction is aldehydo-D-ribose 5-phosphate + D-glyceraldehyde 3-phosphate + L-glutamine = pyridoxal 5'-phosphate + L-glutamate + phosphate + 3 H2O + H(+). Its pathway is cofactor biosynthesis; pyridoxal 5'-phosphate biosynthesis. In terms of biological role, catalyzes the formation of pyridoxal 5'-phosphate from ribose 5-phosphate (RBP), glyceraldehyde 3-phosphate (G3P) and ammonia. The ammonia is provided by the PdxT subunit. Can also use ribulose 5-phosphate and dihydroxyacetone phosphate as substrates, resulting from enzyme-catalyzed isomerization of RBP and G3P, respectively. In Clostridium pasteurianum, this protein is Pyridoxal 5'-phosphate synthase subunit PdxS.